The chain runs to 293 residues: Ethanolamine ammonia-lyase small subunit (293 aa).

2 residues coordinate adenosylcob(III)alamin: V207 and E228.

Belongs to the EutC family. As to quaternary structure, the basic unit is a heterodimer which dimerizes to form tetramers. The heterotetramers trimerize; 6 large subunits form a core ring with 6 small subunits projecting outwards. Adenosylcob(III)alamin serves as cofactor.

The protein resides in the bacterial microcompartment. It catalyses the reaction ethanolamine = acetaldehyde + NH4(+). It functions in the pathway amine and polyamine degradation; ethanolamine degradation. Its function is as follows. Catalyzes the deamination of various vicinal amino-alcohols to oxo compounds. Allows this organism to utilize ethanolamine as the sole source of nitrogen and carbon in the presence of external vitamin B12. The chain is Ethanolamine ammonia-lyase small subunit from Listeria monocytogenes serovar 1/2a (strain ATCC BAA-679 / EGD-e).